The sequence spans 753 residues: Striatin-4 (753 aa).

The interval 10–65 is disordered; the sequence is VAAAASSCRPLGSGAGPGPTGAAPVSAPAPGPGPAGKGGGGGGSPGPTAGPEPLSL. Residues 43–54 are compositionally biased toward gly residues; the sequence is PAGKGGGGGGSP. Residue Ser-53 is modified to Phosphoserine. Residues 69-136 adopt a coiled-coil conformation; that stretch reads LHFIQHEWAR…QERAKYHKLK (68 aa). Positions 71-79 are caveolin-binding; sequence FIQHEWARF. The calmodulin-binding stretch occupies residues 165–182; that stretch reads ENSPLVWKEGRQLLRQYL. A Phosphoserine modification is found at Ser-206. 3 disordered regions span residues 213–232, 271–345, and 363–382; these read VEPS…LSGG, CEDE…SPHE, and VDGL…QPRP. 2 stretches are compositionally biased toward acidic residues: residues 271-283 and 302-317; these read CEDE…DELD and EMED…DAIN. Ser-276 is modified (phosphoserine). The segment covering 332–345 has biased composition (basic and acidic residues); sequence PDPRRCTVDGSPHE. Residues 370–380 are compositionally biased toward pro residues; it reads VTGPPPGTPQP. WD repeat units lie at residues 436–475, 489–528, 542–581, 587–628, 635–674, 677–716, and 723–753; these read SHYD…TAKK, AHRG…MDPY, GHGD…PACL, ASEH…ALLT, SGPT…PVHS, AHLD…CVQE, and KHEE…KVFV.

The protein belongs to the WD repeat striatin family. In terms of assembly, part of the core of STRIPAK complexes composed of PP2A catalytic and scaffolding subunits, the striatins (PP2A regulatory subunits), the striatin-associated proteins MOB4, STRIP1 and STRIP2, PDCD10 and members of the STE20 kinases, such as STK24 and STK26. Interacts with CTTNBP2NL.

It is found in the cytoplasm. Calmodulin-binding scaffolding protein which is the center of the striatin-interacting phosphatase and kinase (STRIPAK) complexes. STRIPAK complexes have critical roles in protein (de)phosphorylation and are regulators of multiple signaling pathways including Hippo, MAPK, nuclear receptor and cytoskeleton remodeling. Different types of STRIPAK complexes are involved in a variety of biological processes such as cell growth, differentiation, apoptosis, metabolism and immune regulation. Key regulator of the expanded Hippo signaling pathway by interacting and allowing the inhibition of MAP4K kinases by the STRIPAK complex. This Homo sapiens (Human) protein is Striatin-4.